Consider the following 291-residue polypeptide: ATP phosphoribosyltransferase (291 aa).

It belongs to the ATP phosphoribosyltransferase family. Long subfamily. Requires Mg(2+) as cofactor.

It is found in the cytoplasm. It catalyses the reaction 1-(5-phospho-beta-D-ribosyl)-ATP + diphosphate = 5-phospho-alpha-D-ribose 1-diphosphate + ATP. The protein operates within amino-acid biosynthesis; L-histidine biosynthesis; L-histidine from 5-phospho-alpha-D-ribose 1-diphosphate: step 1/9. Feedback inhibited by histidine. Its function is as follows. Catalyzes the condensation of ATP and 5-phosphoribose 1-diphosphate to form N'-(5'-phosphoribosyl)-ATP (PR-ATP). Has a crucial role in the pathway because the rate of histidine biosynthesis seems to be controlled primarily by regulation of HisG enzymatic activity. The chain is ATP phosphoribosyltransferase from Geotalea uraniireducens (strain Rf4) (Geobacter uraniireducens).